The sequence spans 655 residues: Protein nipi-3 (655 aa).

A disordered region spans residues 1-35; it reads MARTKCKTKTVANPRTGVRKTAKDLSEPVRQDAVS. A compositionally biased stretch (basic and acidic residues) spans 21–35; it reads TAKDLSEPVRQDAVS. A Protein kinase domain is found at 200–470; it reads IGIFVIYGTG…NQVNGDFPEI (271 aa). ATP-binding positions include 206-214 and Lys235; that span reads YGTGLVTRA.

The protein belongs to the protein kinase superfamily. CAMK Ser/Thr protein kinase family. May interact with transcription factor cebp-1 (via N-terminus). In terms of tissue distribution, expressed in epidermis, pharynx, intestine, a subset of head neurons and motoneurons.

Its subcellular location is the nucleus. Its function is as follows. Adapter protein that regulates different signaling pathways. Required for larval development and viability. Involved in negatively modulating pmk-1 p38/MAPK signaling. Involved in innate immunity, acting either in a manner dependent upon, or independent of, the pmk-1 or pmk-3 p38/MAPK pathways. Has a protective role in response to infection by the Gram-negative bacterium P.aeruginosa, acting by negatively modulating expression of cebp-1, and regulating the pmk-1 p38/MAPK pathway, leading to activation of transcription factor skn-1. Required to prevent P.aeruginosa toxin ToxA-mediated lethality, probably acting via modulating the effects of translational inhibition caused by the toxin. By regulating the up-regulation in the epidermis of antimicrobial peptides nlp-29 and nlp-31, plays a role in resistance to fungal infection. The chain is Protein nipi-3 from Caenorhabditis elegans.